The following is a 68-amino-acid chain: DNA-directed RNA polymerase subunit omega (68 aa).

It belongs to the RNA polymerase subunit omega family. In terms of assembly, the RNAP catalytic core consists of 2 alpha, 1 beta, 1 beta' and 1 omega subunit. When a sigma factor is associated with the core the holoenzyme is formed, which can initiate transcription.

It carries out the reaction RNA(n) + a ribonucleoside 5'-triphosphate = RNA(n+1) + diphosphate. In terms of biological role, promotes RNA polymerase assembly. Latches the N- and C-terminal regions of the beta' subunit thereby facilitating its interaction with the beta and alpha subunits. The polypeptide is DNA-directed RNA polymerase subunit omega (Sulfurovum sp. (strain NBC37-1)).